The following is a 145-amino-acid chain: CASP-like protein SELMODRAFT_406854 (145 aa).

Residues 1–31 (MGVASQSSVANEAGAAPEASIQQTLRGFSSP) are Cytoplasmic-facing. The helical transmembrane segment at 32 to 52 (TSLLLRIATAVLCTLTLAFLV) threads the bilayer. At 53–75 (TSKERKEIASIDIVAIWSNSKAL) the chain is on the extracellular side. Residues 76–96 (IFLAVVSGICLGYSLLHAAVF) form a helical membrane-spanning segment. At 97–112 (LVMLSGNRKPLARKKA) the chain is on the cytoplasmic side. The helical transmembrane segment at 113 to 133 (LDWMVFLADQVFFKIFCWFSI) threads the bilayer. The Extracellular segment spans residues 134–145 (RVSSRRSKAGFV).

This sequence belongs to the Casparian strip membrane proteins (CASP) family. In terms of assembly, homodimer and heterodimers.

It localises to the cell membrane. The protein is CASP-like protein SELMODRAFT_406854 of Selaginella moellendorffii (Spikemoss).